Reading from the N-terminus, the 1556-residue chain is uncharacterized protein (1556 aa).

This is an uncharacterized protein from Ictalurid herpesvirus 1 (strain Auburn) (IcHV-1).